A 611-amino-acid polypeptide reads, in one-letter code: Leukotriene A-4 hydrolase (611 aa).

K73 carries the N6-acetyllysine modification. A peptide-binding positions include 135–137 (QCQ) and 267–272 (PYGGME). H296 provides a ligand contact to Zn(2+). The active-site Proton acceptor is the E297. Zn(2+) is bound by residues H300 and E319. Residue K337 is modified to N6-acetyllysine. Y384 (proton donor) is an active-site residue. At K414 the chain carries N6-acetyllysine. Position 416 is a phosphoserine (S416). 564–566 (RMK) serves as a coordination point for a peptide. At K573 the chain carries N6-acetyllysine.

Belongs to the peptidase M1 family. In terms of assembly, monomer. Requires Zn(2+) as cofactor. Post-translationally, phosphorylation at Ser-416 inhibits leukotriene-A4 hydrolase activity. activity.

The protein localises to the cytoplasm. The enzyme catalyses leukotriene A4 + H2O = leukotriene B4. The catalysed reaction is (5S,6S)-epoxy-(18R)-hydroxy-(7E,9E,11Z,14Z,16E)-eicosapentaenoate + H2O = resolvin E1. It carries out the reaction (5S,6S)-epoxy-(18S)-hydroxy-(7E,9E,11Z,14Z,16E)-eicosapentaenoate + H2O = 18S-resolvin E1. It catalyses the reaction Release of the N-terminal residue from a tripeptide.. The protein operates within lipid metabolism; leukotriene B4 biosynthesis. With respect to regulation, inhibited by bestatin. The epoxide hydrolase activity is restrained by suicide inactivation that involves binding of LTA4 to Tyr-379. 4-(4-benzylphenyl)thiazol-2-amine (ARM1) selectively inhibits the epoxide hydrolase activity. In terms of biological role, bifunctional zinc metalloenzyme that comprises both epoxide hydrolase (EH) and aminopeptidase activities. Acts as an epoxide hydrolase to catalyze the conversion of LTA4 to the pro-inflammatory mediator leukotriene B4 (LTB4). Also has aminopeptidase activity, with high affinity for N-terminal arginines of various synthetic tripeptides. In addition to its pro-inflammatory EH activity, may also counteract inflammation by its aminopeptidase activity, which inactivates by cleavage another neutrophil attractant, the tripeptide Pro-Gly-Pro (PGP), a bioactive fragment of collagen generated by the action of matrix metalloproteinase-9 (MMP9) and prolylendopeptidase (PREPL). Involved also in the biosynthesis of resolvin E1 and 18S-resolvin E1 from eicosapentaenoic acid, two lipid mediators that show potent anti-inflammatory and pro-resolving actions. This is Leukotriene A-4 hydrolase (LTA4H) from Bos taurus (Bovine).